The sequence spans 94 residues: Co-chaperonin GroES (94 aa).

It belongs to the GroES chaperonin family. Heptamer of 7 subunits arranged in a ring. Interacts with the chaperonin GroEL.

Its subcellular location is the cytoplasm. Its function is as follows. Together with the chaperonin GroEL, plays an essential role in assisting protein folding. The GroEL-GroES system forms a nano-cage that allows encapsulation of the non-native substrate proteins and provides a physical environment optimized to promote and accelerate protein folding. GroES binds to the apical surface of the GroEL ring, thereby capping the opening of the GroEL channel. The polypeptide is Co-chaperonin GroES (Staphylococcus carnosus (strain TM300)).